Here is a 217-residue protein sequence, read N- to C-terminus: Large ribosomal subunit protein uL3 (217 aa).

The disordered stretch occupies residues 137–160 (VSASHGSHRNHRKPGSIGASSTPS).

It belongs to the universal ribosomal protein uL3 family. As to quaternary structure, part of the 50S ribosomal subunit. Forms a cluster with proteins L14 and L19.

Functionally, one of the primary rRNA binding proteins, it binds directly near the 3'-end of the 23S rRNA, where it nucleates assembly of the 50S subunit. This Clavibacter michiganensis subsp. michiganensis (strain NCPPB 382) protein is Large ribosomal subunit protein uL3.